A 95-amino-acid chain; its full sequence is Alpha-conotoxin GeXXA (95 aa).

A signal peptide spans 1 to 21; that stretch reads MPKQEKMMLVLLILPLPYCNA. Residues 22 to 45 constitute a propeptide that is removed on maturation; it reads AGVTTVQWGGHGDGLDRYLQRGVR. 4 cysteine pairs are disulfide-bonded: Cys64–Cys73, Cys69–Cys81, Cys74–Cys91, and Cys79–Cys93.

Belongs to the conotoxin D superfamily. As to quaternary structure, homodimer. Pseudo-homodimer (identical sequence, different post-translational modifications). As to expression, expressed by the venom duct.

Its subcellular location is the secreted. In terms of biological role, alpha-D-conopeptides act as non-competitive inhibitors of nicotinic acetylcholine receptors (nAChR). Through its two C-terminal domains, this homodimeric protein would bind to two nAChR allosteric sites, located outside the nAChR C-loop of the principal binding face and at the adjacent binding interface in a clockwise direction. This toxin has strong inhibitory activity on rat alpha-9-alpha-10 (CHRNA9-CHRNA10) (IC(50)=1.2 nM) and a moderate inhibitory activity on human alpha-7 (CHRNA7) (IC(50)=210 nM), rat alpha-3-beta-2 (CHRNA3-CHRNB2) (IC(50)=498 nM), rat alpha-3-beta-4 (CHRNA3-CHRNB4) (IC(50)=614 nM) and rat alpha-1-beta-1-delta-epsilon (CHRNA1-CHRNB1-CHRNE-CHRND) (IC(50)=743 nM) subtypes. Shows a weaker inhibitory activity on human alpha-9-alpha-10 (IC(50)=28 nM) than on the rat channel. This is explained by a different residue in the probable binding site (His-31 in rat alpha-10 and Leu-31 in human). The protein is Alpha-conotoxin GeXXA of Conus generalis (General cone).